The chain runs to 180 residues: Chromosome-anchoring protein RacA (180 aa).

The segment at residues Thr5–Gln25 is a DNA-binding region (H-T-H motif). Residues Lys67–Pro151 adopt a coiled-coil conformation.

It belongs to the RacA family.

It is found in the cytoplasm. Functionally, required for the formation of axial filaments and for anchoring the origin regions at the cell poles in sporulating cells, thus ensuring proper chromosome segregation in the prespore. Binds in a dispersed manner throughout the chromosome but preferentially to sites clustered in the origin portion of the chromosome, causing condensation of the chromosome and its remodeling into an elongated, anchored structure. The chain is Chromosome-anchoring protein RacA from Bacillus cereus (strain B4264).